The primary structure comprises 420 residues: Glucose-1-phosphate adenylyltransferase (420 aa).

Residues Tyr107, Gly173, 188-189, and Ser206 contribute to the alpha-D-glucose 1-phosphate site; that span reads EK.

The protein belongs to the bacterial/plant glucose-1-phosphate adenylyltransferase family. Homotetramer.

It catalyses the reaction alpha-D-glucose 1-phosphate + ATP + H(+) = ADP-alpha-D-glucose + diphosphate. It participates in glycan biosynthesis; glycogen biosynthesis. Involved in the biosynthesis of ADP-glucose, a building block required for the elongation reactions to produce glycogen. Catalyzes the reaction between ATP and alpha-D-glucose 1-phosphate (G1P) to produce pyrophosphate and ADP-Glc. This Shewanella baltica (strain OS185) protein is Glucose-1-phosphate adenylyltransferase.